The sequence spans 151 residues: Arginine repressor (151 aa).

This sequence belongs to the ArgR family.

It localises to the cytoplasm. The protein operates within amino-acid biosynthesis; L-arginine biosynthesis [regulation]. In terms of biological role, regulates arginine biosynthesis genes. The sequence is that of Arginine repressor from Lachnospira eligens (strain ATCC 27750 / DSM 3376 / VPI C15-48 / C15-B4) (Eubacterium eligens).